A 549-amino-acid polypeptide reads, in one-letter code: 65-kDa microtubule-associated protein 9 (549 aa).

Coiled coils occupy residues 36–123 (IEIE…ERKI), 160–199 (SLRK…CSVL), and 459–492 (GNRL…HQGQ). The disordered stretch occupies residues 474 to 549 (EEKEQERRRK…SFSTPLSRHG (76 aa)). Residues 481 to 490 (RRKRDLKKHQ) show a composition bias toward basic residues. Ser501 and Ser546 each carry phosphoserine. The span at 514–549 (VSTNKRFVSSPHTPQTDSPHSAKSNQSFSTPLSRHG) shows a compositional bias: polar residues.

Belongs to the MAP65/ASE1 family. Forms dimer. Binds to microtubules (MT).

The protein resides in the nucleus. It is found in the cytoplasm. It localises to the cytoskeleton. Its subcellular location is the spindle pole. This chain is 65-kDa microtubule-associated protein 9 (MAP65-9), found in Arabidopsis thaliana (Mouse-ear cress).